Reading from the N-terminus, the 367-residue chain is NADH-quinone oxidoreductase subunit D (367 aa).

The protein belongs to the complex I 49 kDa subunit family. In terms of assembly, NDH-1 is composed of 14 different subunits. Subunits NuoB, C, D, E, F, and G constitute the peripheral sector of the complex.

The protein resides in the cell membrane. The enzyme catalyses a quinone + NADH + 5 H(+)(in) = a quinol + NAD(+) + 4 H(+)(out). Its function is as follows. NDH-1 shuttles electrons from NADH, via FMN and iron-sulfur (Fe-S) centers, to quinones in the respiratory chain. The immediate electron acceptor for the enzyme in this species is believed to be ubiquinone. Couples the redox reaction to proton translocation (for every two electrons transferred, four hydrogen ions are translocated across the cytoplasmic membrane), and thus conserves the redox energy in a proton gradient. The polypeptide is NADH-quinone oxidoreductase subunit D (Dehalococcoides mccartyi (strain ATCC BAA-2100 / JCM 16839 / KCTC 5957 / BAV1)).